The primary structure comprises 403 residues: Serine/threonine transporter SstT (403 aa).

The next 9 helical transmembrane spans lie at 16-36, 45-65, 79-99, 138-158, 175-195, 214-234, 295-315, 327-347, and 353-373; these read QIVIGLIAGIALALLAPAIAL, FVSALKAVAPVLVFILVMASI, ILWLYLLGTFSAAVVAVVASM, ALLNANFIGVLTWAIGLGVAL, GVTLIVRVVIRFAPLGIFGLV, LAVLIGCMLFVALVMNPLIVF, MAGAAITITVLTLAAVHTLGI, MVAAVCACGASGVAGGSLLLI, and LFGIPSEIAMQVVAVGFIIGV.

Belongs to the dicarboxylate/amino acid:cation symporter (DAACS) (TC 2.A.23) family.

The protein localises to the cell inner membrane. The enzyme catalyses L-serine(in) + Na(+)(in) = L-serine(out) + Na(+)(out). The catalysed reaction is L-threonine(in) + Na(+)(in) = L-threonine(out) + Na(+)(out). Involved in the import of serine and threonine into the cell, with the concomitant import of sodium (symport system). The chain is Serine/threonine transporter SstT from Pseudomonas putida (strain W619).